We begin with the raw amino-acid sequence, 244 residues long: Fumarate reductase iron-sulfur subunit (244 aa).

Y14 is a binding site for a menaquinone. The 2Fe-2S ferredoxin-type domain maps to P16–F97. [2Fe-2S] cluster is bound by residues C58, C63, C66, and C78. The region spanning M140–I169 is the 4Fe-4S ferredoxin-type domain. Residues C149, C152, and C155 each coordinate [4Fe-4S] cluster. C159, C205, and C211 together coordinate [3Fe-4S] cluster. C215 lines the [4Fe-4S] cluster pocket. Residue Q226 to K229 participates in a menaquinone binding.

Belongs to the succinate dehydrogenase/fumarate reductase iron-sulfur protein family. Fumarate dehydrogenase forms part of an enzyme complex containing four subunits: a flavoprotein, an iron-sulfur, and two hydrophobic anchor proteins. It depends on [2Fe-2S] cluster as a cofactor. [3Fe-4S] cluster serves as cofactor. The cofactor is [4Fe-4S] cluster.

It is found in the cell inner membrane. It catalyses the reaction a quinone + succinate = fumarate + a quinol. It carries out the reaction a menaquinone + succinate = a menaquinol + fumarate. Its function is as follows. Two distinct, membrane-bound, FAD-containing enzymes are responsible for the catalysis of fumarate and succinate interconversion; the fumarate reductase is used in anaerobic growth, and the succinate dehydrogenase is used in aerobic growth. This chain is Fumarate reductase iron-sulfur subunit (frdB), found in Escherichia coli O157:H7.